The chain runs to 374 residues: MNAPDSFQTDLDALHEDMARANMAPTWKYVSDFVAKEPRVGFRPWLWRWNDVLPLLMRAGDLITPERGAERRSMEHVNPDLKSAYSTSHTIATAFQLVRAGETAPAHRHAAAAIRFAARSKGGSVYTRVQGERLMMEEFDLLLTPAGTWHEHANETANDIVWLDALDFPLVNLLKASVFEPGDSDTCEPKPDDFSRQHLGLYRPVGWSDYPEPHPVMRYPWVEMKAALDAAASSGATGSPFDGIVMAYTNPLNSGPTLPTLSCRAQLLRPKESTCAHRATSSTVYFVISGTGTTVVNGTAYRWGPGDVFVVPNWAWHEHLNGDSDAYLFSITDEPVMRTLGIYREQAYAAPGPHQLITGEFDSTQQCVRELSSL.

It belongs to the gentisate 1,2-dioxygenase family. Requires Fe(2+) as cofactor.

The catalysed reaction is 5-amino-2-hydroxybenzoate + O2 = (2Z,4E)-4-amino-6-oxohepta-2,4-dienedioate + H(+). Its activity is regulated as follows. Inhibited by SDS and o-phenanthroline, a ferrous iron chelator. Partially inhibited by EDTA. In terms of biological role, involved in the biodegradation of 3-aminobenzoate. Catalyzes the cleavage of the 5-aminosalicylate (5ASA) aromatic ring to form 4-amino-6-oxohepta-2,4-dienedioate (cis-ACOHDA). Can also convert gentisate, but the catalytic efficiency with 5ASA is 70-fold higher. The sequence is that of 5-aminosalicylate 1,2-dioxygenase from Comamonas sp.